The primary structure comprises 520 residues: Laccase (520 aa).

The N-terminal stretch at 1–21 is a signal peptide; sequence MSRFQSLLAFVVASLAAVAHA. Plastocyanin-like domains are found at residues 23 to 148 and 160 to 302; these read IGPT…FVVY and VDND…ILRY. 2 N-linked (GlcNAc...) asparagine glycosylation sites follow: Asn-72 and Asn-75. His-85, His-87, His-130, and His-132 together coordinate Cu cation. 2 disulfides stabilise this stretch: Cys-106-Cys-509 and Cys-138-Cys-226. N-linked (GlcNAc...) asparagine glycans are attached at residues Asn-210, Asn-229, and Asn-354. The 123-residue stretch at 369–491 folds into the Plastocyanin-like 3 domain; sequence TVPVLLQIIS…AGFAVVFAED (123 aa). The Cu cation site is built by His-416, His-419, His-421, His-473, Cys-474, His-475, and His-479.

The protein belongs to the multicopper oxidase family. It depends on Cu cation as a cofactor.

It is found in the secreted. The catalysed reaction is 4 hydroquinone + O2 = 4 benzosemiquinone + 2 H2O. Lignin degradation and detoxification of lignin-derived products. Has activity towards guaiacol. The protein is Laccase of Trametes hirsuta (White-rot fungus).